The primary structure comprises 301 residues: UBX domain-containing protein 2 (301 aa).

The segment at M1–H61 is disordered. The 65-residue stretch at T89–V153 folds into the SEP domain. The interval G176 to A200 is disordered. Residues S178–T192 are compositionally biased toward low complexity. In terms of domain architecture, UBX spans M218–K295.

The protein belongs to the NSFL1C family. Interacts with cdc-48.1 (via N-terminus) and cdc-48.2 (via N-terminus). Interacts with kinase air-1. In terms of tissue distribution, expressed in the germline (at protein level). Expressed in spermatocytes but not in mature sperm (at protein level). Ubiquitously expressed. Predominantly expressed in the spermatheca.

Its subcellular location is the cytoplasm. It localises to the perinuclear region. It is found in the nucleus. The protein localises to the cytoskeleton. The protein resides in the microtubule organizing center. Its subcellular location is the centrosome. Ubiquitin-binding protein which acts as an adapter for ATPase cdc-48.1 and/or cdc-48.2, conferring substrate specificity. Together with ubxn-2 and ubxn-3, plays a role in hermaphrodite spermatogenesis probably by promoting the degradation of sex determination terminal factor tra-1. Probably in association with ATPase cdc-48.1 or/and cdc-48.2, regulates the centrosomal levels of kinase air-1 levels during mitotic progression by promoting air-1 removal from centrosomes in prophase. Also, regulates spindle orientation in the one-cell embryo by controlling centration and rotation of the pronuclei-centrosome complex in prophase. This Caenorhabditis elegans protein is UBX domain-containing protein 2.